We begin with the raw amino-acid sequence, 306 residues long: Acetyl-coenzyme A carboxylase carboxyl transferase subunit beta (306 aa).

The CoA carboxyltransferase N-terminal domain occupies 25–294 (VWTKCDSCGQ…PSPDAPREAV (270 aa)). 4 residues coordinate Zn(2+): cysteine 29, cysteine 32, cysteine 48, and cysteine 51. A C4-type zinc finger spans residues 29–51 (CDSCGQVLYRAELERNLEVCPKC). Residues 286 to 306 (SPDAPREAVVVPPVPDQDHEA) are disordered.

Belongs to the AccD/PCCB family. Acetyl-CoA carboxylase is a heterohexamer composed of biotin carboxyl carrier protein (AccB), biotin carboxylase (AccC) and two subunits each of ACCase subunit alpha (AccA) and ACCase subunit beta (AccD). Requires Zn(2+) as cofactor.

It is found in the cytoplasm. It carries out the reaction N(6)-carboxybiotinyl-L-lysyl-[protein] + acetyl-CoA = N(6)-biotinyl-L-lysyl-[protein] + malonyl-CoA. Its pathway is lipid metabolism; malonyl-CoA biosynthesis; malonyl-CoA from acetyl-CoA: step 1/1. Component of the acetyl coenzyme A carboxylase (ACC) complex. Biotin carboxylase (BC) catalyzes the carboxylation of biotin on its carrier protein (BCCP) and then the CO(2) group is transferred by the transcarboxylase to acetyl-CoA to form malonyl-CoA. The polypeptide is Acetyl-coenzyme A carboxylase carboxyl transferase subunit beta (Cronobacter sakazakii (strain ATCC BAA-894) (Enterobacter sakazakii)).